Reading from the N-terminus, the 788-residue chain is Patatin-like phospholipase domain-containing protein DEHA2B04136g (788 aa).

Residues 136-156 (WPILIFISCWISLLCFMYIIV) traverse the membrane as a helical segment. In terms of domain architecture, PNPLA spans 311–503 (LCLSGGACFT…RTDIPIDALN (193 aa)). A GXSXG motif is present at residues 342-346 (GTSGG). Ser344 serves as the catalytic Nucleophile. The active-site Proton acceptor is Asp490. Residues 662–672 (ANFNTLTSSDS) show a composition bias toward polar residues. The segment at 662–771 (ANFNTLTSSD…DTGSRFLKSF (110 aa)) is disordered. Composition is skewed to acidic residues over residues 690–705 (MFDD…DDEV) and 723–749 (EDGD…DEAN).

Belongs to the PLPL family.

The protein localises to the membrane. Its function is as follows. Probable lipid hydrolase. In Debaryomyces hansenii (strain ATCC 36239 / CBS 767 / BCRC 21394 / JCM 1990 / NBRC 0083 / IGC 2968) (Yeast), this protein is Patatin-like phospholipase domain-containing protein DEHA2B04136g.